The chain runs to 503 residues: Trehalose-6-phosphate synthase (503 aa).

Positions 1-14 (MTDQSGNGVRSGSA) are enriched in polar residues. The disordered stretch occupies residues 1–20 (MTDQSGNGVRSGSASEAPPS). D-glucose 6-phosphate is bound at residue R31. 51-52 (GG) contributes to the UDP-alpha-D-glucose binding site. 2 residues coordinate D-glucose 6-phosphate: Y109 and D163. UDP-alpha-D-glucose is bound by residues R305 and K310. Residue R343 participates in D-glucose 6-phosphate binding. UDP-alpha-D-glucose is bound at residue 408–412 (LVAKE).

The protein belongs to the glycosyltransferase 20 family. In terms of assembly, homotetramer.

It catalyses the reaction ADP-alpha-D-glucose + D-glucose 6-phosphate = alpha,alpha-trehalose 6-phosphate + ADP + H(+). It carries out the reaction CDP-alpha-D-glucose + D-glucose 6-phosphate = alpha,alpha-trehalose 6-phosphate + CDP + H(+). The enzyme catalyses GDP-alpha-D-glucose + D-glucose 6-phosphate = alpha,alpha-trehalose 6-phosphate + GDP + H(+). The catalysed reaction is TDP-alpha-D-glucose + D-glucose 6-phosphate = 5-methyl-UDP + alpha,alpha-trehalose 6-phosphate + H(+). It catalyses the reaction D-glucose 6-phosphate + UDP-alpha-D-glucose = alpha,alpha-trehalose 6-phosphate + UDP + H(+). The protein operates within glycan biosynthesis; trehalose biosynthesis. Probably involved in the osmoprotection via the biosynthesis of trehalose and in the production of glycogen and alpha-glucan via the TreS-Pep2 branch involved in the biosynthesis of maltose-1-phosphate (M1P). Catalyzes the transfer of glucose from UDP-glucose (UDP-Glc) to D-glucose 6-phosphate (Glc-6-P) to form trehalose-6-phosphate. Probably also able to use ADP-Glc, CDP-Glc, GDP-Glc and TDP-Glc as glucosyl donors. This chain is Trehalose-6-phosphate synthase, found in Mycolicibacterium gilvum (strain PYR-GCK) (Mycobacterium gilvum (strain PYR-GCK)).